The sequence spans 32 residues: Protamine-2 (32 aa).

The disordered stretch occupies residues 1–32; that stretch reads PRRRRSSSRPVRRRRARRVSRRRRRRGGRRRR.

Testis.

The protein localises to the nucleus. It localises to the chromosome. Its function is as follows. Protamines substitute for histones in the chromatin of sperm during the haploid phase of spermatogenesis. They compact sperm DNA into a highly condensed, stable and inactive complex. This chain is Protamine-2, found in Oncorhynchus mykiss (Rainbow trout).